A 404-amino-acid polypeptide reads, in one-letter code: Cytochrome b561 and DOMON domain-containing protein At2g04850 (404 aa).

An N-terminal signal peptide occupies residues 1-22 (MATLILSFLLLLLATKLPESLA). One can recognise a DOMON domain in the interval 43–173 (QQASIAWTYH…TKIHHVWNRG (131 aa)). Residues 180–380 (SPTIHPTTST…MEVNSWVVFC (201 aa)) form the Cytochrome b561 domain. Residues 217–237 (VTHGVVNAISWGFLLPAGAVT) form a helical membrane-spanning segment. Positions 219 and 255 each coordinate heme b. A helical membrane pass occupies residues 256–276 (AAIQLTGFLLGTIGFSIGIVL). His-288 contacts heme b. Residues 290–310 (SLGIATFTAAALQTLALLFRP) traverse the membrane as a helical segment. Residue His-324 coordinates heme b. Transmembrane regions (helical) follow at residues 326–346 (FVGY…FEVL) and 359–379 (LCLS…WVVF).

Heme b serves as cofactor.

The protein resides in the membrane. Functionally, may act as a catecholamine-responsive trans-membrane electron transporter. The polypeptide is Cytochrome b561 and DOMON domain-containing protein At2g04850 (Arabidopsis thaliana (Mouse-ear cress)).